The following is a 448-amino-acid chain: Dual specificity mitogen-activated protein kinase kinase 5 (448 aa).

Positions 18 to 25 (VIRIKIPN) are interaction with MAPK7. The region spanning 18 to 109 (VIRIKIPNSG…EPLQIFPRAC (92 aa)) is the PB1 domain. The segment at 64 to 68 (DEDGD) is interaction with MAP3K2/MAP3K3. The tract at residues 116 to 144 (NIHGLKVNTRAGPSQHSSPAVSDSLPSNS) is disordered. Residues 117-131 (IHGLKVNTRAGPSQH) form an interaction with MAPK7 region. The segment covering 126-144 (AGPSQHSSPAVSDSLPSNS) has biased composition (polar residues). Residues 166–409 (IRYRDTLGHG…MRKQPKERPA (244 aa)) enclose the Protein kinase domain. ATP-binding positions include 172 to 180 (LGHGNGGTV) and K195. D283 serves as the catalytic Proton acceptor. Residue S311 is modified to Phosphoserine. T315 is subject to Phosphothreonine.

Belongs to the protein kinase superfamily. STE Ser/Thr protein kinase family. MAP kinase kinase subfamily. In terms of assembly, interacts with PARD6A, MAP3K3 and MAPK7. Forms a complex with SQSTM1 and PRKCZ or PRKCI. As to quaternary structure, (Microbial infection) Interacts with Yersinia YopJ. Requires Mg(2+) as cofactor. Activated by phosphorylation on Ser/Thr by MAP kinase kinase kinases. Post-translationally, (Microbial infection) Yersinia YopJ may acetylate Ser/Thr residues, preventing phosphorylation and activation, thus blocking the MAPK signaling pathway. As to expression, expressed in many adult tissues. Abundant in heart and skeletal muscle.

The enzyme catalyses L-seryl-[protein] + ATP = O-phospho-L-seryl-[protein] + ADP + H(+). The catalysed reaction is L-threonyl-[protein] + ATP = O-phospho-L-threonyl-[protein] + ADP + H(+). It carries out the reaction L-tyrosyl-[protein] + ATP = O-phospho-L-tyrosyl-[protein] + ADP + H(+). In terms of biological role, acts as a scaffold for the formation of a ternary MAP3K2/MAP3K3-MAP3K5-MAPK7 signaling complex. Activation of this pathway appears to play a critical role in protecting cells from stress-induced apoptosis, neuronal survival and cardiac development and angiogenesis. As part of the MAPK/ERK signaling pathway, acts as a negative regulator of apoptosis in cardiomyocytes via promotion of STUB1/CHIP-mediated ubiquitination and degradation of ICER-type isoforms of CREM. This chain is Dual specificity mitogen-activated protein kinase kinase 5 (MAP2K5), found in Homo sapiens (Human).